The sequence spans 516 residues: Nuclear speckle splicing regulatory protein 1 (516 aa).

Disordered regions lie at residues 1 to 43 (MATS…GESL), 111 to 137 (ERKKEQERRDERKIQKEREAEGEKFAD), 151 to 170 (KERQEELEREKREAELEAAL), and 188 to 494 (QTVG…SSAR). The residue at position 33 (Ser-33) is a Phosphoserine. A coiled-coil region spans residues 100 to 176 (KYINQLLRAV…EAALDVKKQK (77 aa)). A compositionally biased stretch (low complexity) spans 207–221 (TSSAAAERSPSPEST). Basic and acidic residues-rich tracts occupy residues 222-239 (ANRRESEAESHSDDDQVD) and 271-466 (ERER…KLVE). Residues 358–401 (KGERDRRDNSPKDRERDRKGERDRRDNSPKDRERETRDKSPKDR) adopt a coiled-coil conformation.

Belongs to the NSRP1 family.

This is Nuclear speckle splicing regulatory protein 1 (nsrp1) from Danio rerio (Zebrafish).